The primary structure comprises 586 residues: Alanine racemase ungC (586 aa).

Positions 187–206 (RVGALPAAASTASPMGSSLP) are disordered. A compositionally biased stretch (polar residues) spans 196–206 (STASPMGSSLP).

The protein belongs to the trans-sulfuration enzymes family. Requires pyridoxal 5'-phosphate as cofactor.

It carries out the reaction L-alanine = D-alanine. It participates in secondary metabolite biosynthesis. Its function is as follows. Alanine racemase; part of the gene cluster that mediates the biosynthesis of the unguisins, gamma-aminobutyric acid (GABA)-containing fungal cyclic heptapeptides with the amino acid sequence cyclo-(D-Ala1-D-Val2-L-Phe3-D-Val4-D-Ala5-D-Trp6-GABA7) for unguisin A and cyclo-(D-Ala1-D-Val2-L-Leu3-D-Val4-D-Ala5-D-Trp6-GABA7) for unguisin B. Within the pathway, the alanine racemase ungC catalyzes the interconversion of L-alanine and D-alanine, providing the D-alanine which is accepted by the first adenylation domain of the nonribosomal peptide synthetase (NRPS) ungA. UngA is the main enzyme within the cluster which condenses the 7 residues using its respective 7 modules. The terminal condensation domain (Ct) is involved in cyclization with D-alanine and thereby releasing of unguisins A and B. Finally, the hydrolase ungD catalyzes the hydrolysis between the D-tryptophan and GABA residues of unguisins A and B to produce the corresponding linear peptides. The sequence is that of Alanine racemase ungC from Aspergillus violaceofuscus (strain CBS 115571).